We begin with the raw amino-acid sequence, 792 residues long: Leucine--tRNA ligase (792 aa).

Residues proline 39–histidine 50 carry the 'HIGH' region motif. The 'KMSKS' region motif lies at lysine 569–serine 573. Lysine 572 is a binding site for ATP.

It belongs to the class-I aminoacyl-tRNA synthetase family.

The protein resides in the cytoplasm. It catalyses the reaction tRNA(Leu) + L-leucine + ATP = L-leucyl-tRNA(Leu) + AMP + diphosphate. This Mycoplasma genitalium (strain ATCC 33530 / DSM 19775 / NCTC 10195 / G37) (Mycoplasmoides genitalium) protein is Leucine--tRNA ligase.